Consider the following 379-residue polypeptide: Cytochrome b (379 aa).

Transmembrane regions (helical) follow at residues 33–53 (FGSL…FLAM), 77–98 (WLIR…YLHI), 113–133 (WNIG…GYVL), and 178–198 (FFAF…IHLL). 2 residues coordinate heme b: His83 and His97. Heme b contacts are provided by His182 and His196. His201 serves as a coordination point for a ubiquinone. The next 4 helical transmembrane spans lie at 226 to 246 (YKDL…ALFY), 288 to 308 (LGGV…PILH), 320 to 340 (ASQL…WIGG), and 347 to 367 (YIII…VLNP).

The protein belongs to the cytochrome b family. As to quaternary structure, the cytochrome bc1 complex contains 3 respiratory subunits (MT-CYB, CYC1 and UQCRFS1), 2 core proteins (UQCRC1 and UQCRC2) and probably 6 low-molecular weight proteins. The cofactor is heme b.

Its subcellular location is the mitochondrion inner membrane. Functionally, component of the ubiquinol-cytochrome c reductase complex (complex III or cytochrome b-c1 complex) that is part of the mitochondrial respiratory chain. The b-c1 complex mediates electron transfer from ubiquinol to cytochrome c. Contributes to the generation of a proton gradient across the mitochondrial membrane that is then used for ATP synthesis. This is Cytochrome b (mt-cyb) from Anguilla interioris (Highlands long-finned eel).